The chain runs to 165 residues: MARNAYFILLSCLIVLSPSQGQEAEEDLPSARISCPEGSNAYSSYCYYFTEDRLTWADADLFCQNMNSGYLVSVLSQAEGNFVASLIKESGTTDANVWTGLHDPKRNRRWHWSSGSLFLYKSWATGSPNSSNRGYCVSLTSNTGYKKWKDDNCDAQYSFVCKFKG.

A signal peptide spans Met1 to Gly21. Residue Gln22 is modified to Pyrrolidone carboxylic acid. The C-type lectin domain occupies Ile33–Phe163. 3 disulfide bridges follow: Cys35–Cys46, Cys63–Cys161, and Cys136–Cys153. Asn129 carries an N-linked (GlcNAc...) asparagine glycan.

As to expression, expressed only in regenerating islets and normal exocrine pancreas, but not in normal pancreatic islets. Expressed strongly in pancreas, moderately in gall bladder, and weakly in liver.

The protein resides in the secreted. Functionally, might act as an inhibitor of spontaneous calcium carbonate precipitation. This chain is Lithostathine-1 (Reg1), found in Mus musculus (Mouse).